The sequence spans 334 residues: MLLIGVAGTELSAQERDWLQHDAVAGVVLFKRNFGSRSQVAELSAAIRAAAPRPVLICVDQEGGRVQRFREGFSALAPLQSFGAQYAQAPEAALAAARAHAQLMASEVRASGVDLSFAPVVDLGRGNRAIGDRAFSDDPQIVATFTRAYVQALHGAGMAATLKHFPGHGTVLEDTHVDHASDPRPLEALQAEDLVPFVAGIEAGADAVMMAHVVYPQVAPEPAGYSQRWIEQILRGQMGFRGVVFSDDIGMAASLSAGGVAGRVHAHLDAGCDVVLVCHPELVAESLQAVQGRRLNTAALIGLIGRGALGWDGLLAGTDASFTAPLSAHFGTTA.

Substrate contacts are provided by residues Asp60, Arg68, Arg133, and 163–164; that span reads KH. The active-site Proton donor/acceptor is the His176. The active-site Nucleophile is the Asp247.

This sequence belongs to the glycosyl hydrolase 3 family. NagZ subfamily.

The protein resides in the cytoplasm. It carries out the reaction Hydrolysis of terminal non-reducing N-acetyl-D-hexosamine residues in N-acetyl-beta-D-hexosaminides.. Its pathway is cell wall biogenesis; peptidoglycan recycling. Its function is as follows. Plays a role in peptidoglycan recycling by cleaving the terminal beta-1,4-linked N-acetylglucosamine (GlcNAc) from peptide-linked peptidoglycan fragments, giving rise to free GlcNAc, anhydro-N-acetylmuramic acid and anhydro-N-acetylmuramic acid-linked peptides. In Xanthomonas oryzae pv. oryzae (strain KACC10331 / KXO85), this protein is Beta-hexosaminidase.